Here is a 434-residue protein sequence, read N- to C-terminus: ATP-dependent RNA helicase RhlB (434 aa).

Residues 9-37 carry the Q motif motif; sequence QKFADLGLEPQVLDGLNAKGFINCTPIQA. The region spanning 40-219 is the Helicase ATP-binding domain; that stretch reads LPVLLAGQDI…FEHMQEPEHV (180 aa). Residue 53–60 coordinates ATP; it reads AQTGTGKT. Positions 165–168 match the DEAD box motif; it reads DEAD. In terms of domain architecture, Helicase C-terminal spans 245–390; sequence ALLQTLIEEE…QSDYDTSALL (146 aa). Residues 394–434 form a disordered region; that stretch reads PAPIRLQRRPPQNRRNGSNNGQRQSGNRKHSRPRPPRSPQA. A compositionally biased stretch (low complexity) spans 406–418; it reads NRRNGSNNGQRQS. Basic residues predominate over residues 419–428; sequence GNRKHSRPRP.

The protein belongs to the DEAD box helicase family. RhlB subfamily. In terms of assembly, component of the RNA degradosome, which is a multiprotein complex involved in RNA processing and mRNA degradation.

It localises to the cytoplasm. The catalysed reaction is ATP + H2O = ADP + phosphate + H(+). Its function is as follows. DEAD-box RNA helicase involved in RNA degradation. Has RNA-dependent ATPase activity and unwinds double-stranded RNA. This chain is ATP-dependent RNA helicase RhlB, found in Aliivibrio salmonicida (strain LFI1238) (Vibrio salmonicida (strain LFI1238)).